The sequence spans 524 residues: GMP synthase [glutamine-hydrolyzing] (524 aa).

A Glutamine amidotransferase type-1 domain is found at 9-207 (RILILDFSSQ…VIHICQCIPN (199 aa)). The active-site Nucleophile is the cysteine 86. Residues histidine 181 and glutamate 183 contribute to the active site. The 192-residue stretch at 208–399 (WTTKHIIEDS…LGLPADLIYR (192 aa)) folds into the GMPS ATP-PPase domain. 235–241 (SGGVDSA) contributes to the ATP binding site.

As to quaternary structure, homodimer.

The enzyme catalyses XMP + L-glutamine + ATP + H2O = GMP + L-glutamate + AMP + diphosphate + 2 H(+). It functions in the pathway purine metabolism; GMP biosynthesis; GMP from XMP (L-Gln route): step 1/1. In terms of biological role, catalyzes the synthesis of GMP from XMP. The sequence is that of GMP synthase [glutamine-hydrolyzing] from Coxiella burnetii (strain Dugway 5J108-111).